A 230-amino-acid chain; its full sequence is Cytidylate kinase (230 aa).

Position 12-20 (12-20 (GPSGTGKST)) interacts with ATP.

It belongs to the cytidylate kinase family. Type 1 subfamily.

The protein localises to the cytoplasm. The enzyme catalyses CMP + ATP = CDP + ADP. It catalyses the reaction dCMP + ATP = dCDP + ADP. The protein is Cytidylate kinase of Corynebacterium glutamicum (strain ATCC 13032 / DSM 20300 / JCM 1318 / BCRC 11384 / CCUG 27702 / LMG 3730 / NBRC 12168 / NCIMB 10025 / NRRL B-2784 / 534).